Here is a 493-residue protein sequence, read N- to C-terminus: 3-octaprenyl-4-hydroxybenzoate carboxy-lyase (493 aa).

Asparagine 172 is a binding site for Mn(2+). Residues 175-177 (IYR), 189-191 (RWL), and 194-195 (RG) contribute to the prenylated FMN site. Glutamate 238 lines the Mn(2+) pocket. The active-site Proton donor is aspartate 287.

This sequence belongs to the UbiD family. As to quaternary structure, homohexamer. Requires prenylated FMN as cofactor. Mn(2+) serves as cofactor.

The protein resides in the cell membrane. The enzyme catalyses a 4-hydroxy-3-(all-trans-polyprenyl)benzoate + H(+) = a 2-(all-trans-polyprenyl)phenol + CO2. The protein operates within cofactor biosynthesis; ubiquinone biosynthesis. Functionally, catalyzes the decarboxylation of 3-octaprenyl-4-hydroxy benzoate to 2-octaprenylphenol, an intermediate step in ubiquinone biosynthesis. The chain is 3-octaprenyl-4-hydroxybenzoate carboxy-lyase from Shewanella sp. (strain MR-4).